Here is an 84-residue protein sequence, read N- to C-terminus: MAHKKGASSTRNGRDSNAQRLGVKRFGGQVVGAGEIIVRQRGTHFHPGVNVGRGGDDTLFALSAGSVQFGVKGGRKVVNIVVPA.

A disordered region spans residues 1–21 (MAHKKGASSTRNGRDSNAQRL). The segment covering 7-19 (ASSTRNGRDSNAQ) has biased composition (polar residues).

It belongs to the bacterial ribosomal protein bL27 family.

This is Large ribosomal subunit protein bL27 from Clavibacter michiganensis subsp. michiganensis (strain NCPPB 382).